We begin with the raw amino-acid sequence, 346 residues long: MTTNTVTLQTAHIVSLGDIEEAKASIKPFIRRTPLIKSMYLSQNITKGNVYLKLENMQFTGSFKFRGASNKINHLSDEQKAKGIIGASAGNHAQGVALTAKLLGIDATIVMPETAPIAKQNATKGYGAKVILKGKNFNETRLYMEELAKENGMTIVHPYDDKFVMAGQGTIGLEILDDIWNVNTVIVPVGGGGLIAGIATALKSFNPSIHIIGVQAENVHGMAESFYKRALTEHREDSTIADGCDVKVPGEKTYEVVKHLVDEFILVSEEEIEHAMQDLMQRAKIITEGAGALPTAAILSGKIDKKWLEGKNVVALVSGGNVDLTRVSGVIEHGLNIADTSKGVVG.

59-60 serves as a coordination point for AMP; the sequence is FT. Lys-64 is modified (N6-(pyridoxal phosphate)lysine). AMP contacts are provided by residues Gln-94, 125–126, and Asn-321; that span reads GY.

The protein belongs to the serine/threonine dehydratase family. As to quaternary structure, in the native structure, TdcB is in a dimeric form, whereas in the TdcB-AMP complex, it exists in a tetrameric form (dimer of dimers). Pyridoxal 5'-phosphate is required as a cofactor.

It catalyses the reaction L-threonine = 2-oxobutanoate + NH4(+). Its pathway is amino-acid degradation; L-threonine degradation via propanoate pathway; propanoate from L-threonine: step 1/4. With respect to regulation, each protein molecule can bind up to four molecules of AMP, which act as an allosteric activator to the enzyme. Functionally, catalyzes the anaerobic formation of alpha-ketobutyrate and ammonia from threonine in a two-step reaction. The first step involved a dehydration of threonine and a production of enamine intermediates (aminocrotonate), which tautomerizes to its imine form (iminobutyrate). Both intermediates are unstable and short-lived. The second step is the nonenzymatic hydrolysis of the enamine/imine intermediates to form 2-ketobutyrate and free ammonia. In the low water environment of the cell, the second step is accelerated by RidA. The chain is L-threonine dehydratase catabolic TdcB (tdcB) from Staphylococcus aureus (strain Mu50 / ATCC 700699).